A 634-amino-acid polypeptide reads, in one-letter code: RING finger protein 207 (634 aa).

The RING-type zinc finger occupies 25–63 (CHLCQEQYEHPCLLDCYHTFCASCLRGRVADSRLTCPVC). The segment at 93 to 145 (EETVQCANCDLECKKQDVDAMYYCNTCCQPLCRDCRETTHKAKMFSRHEIVSL) adopts a B box-type; atypical zinc-finger fold. Positions 98, 101, 127, and 132 each coordinate Zn(2+). The disordered stretch occupies residues 575-634 (YEDSTSTADTQPSNELSCNTEDNWTLNSLSEETNPKNKDYYRTNKQKNTTDSTNRKEIPM). Over residues 577–606 (DSTSTADTQPSNELSCNTEDNWTLNSLSEE) the composition is skewed to polar residues. The span at 607 to 616 (TNPKNKDYYR) shows a compositional bias: basic and acidic residues.

The protein resides in the cytoplasm. Functionally, plays a role in cardiac repolarization possibly by stabilizing membrane expression of the potassium channel kcnh6a/zerg, or by assisting its synthesis, folding or export from the endoplasmic reticulum, in a heat shock protein-dependent manner. This chain is RING finger protein 207 (rnf207b), found in Danio rerio (Zebrafish).